The sequence spans 319 residues: Transaldolase (319 aa).

K126 acts as the Schiff-base intermediate with substrate in catalysis.

It belongs to the transaldolase family. Type 1 subfamily. As to quaternary structure, homodimer.

The protein resides in the cytoplasm. The catalysed reaction is D-sedoheptulose 7-phosphate + D-glyceraldehyde 3-phosphate = D-erythrose 4-phosphate + beta-D-fructose 6-phosphate. Its pathway is carbohydrate degradation; pentose phosphate pathway; D-glyceraldehyde 3-phosphate and beta-D-fructose 6-phosphate from D-ribose 5-phosphate and D-xylulose 5-phosphate (non-oxidative stage): step 2/3. Its function is as follows. Transaldolase is important for the balance of metabolites in the pentose-phosphate pathway. This Bordetella petrii (strain ATCC BAA-461 / DSM 12804 / CCUG 43448) protein is Transaldolase.